A 93-amino-acid polypeptide reads, in one-letter code: Cobalt transport protein CbiN (93 aa).

Transmembrane regions (helical) follow at residues 5-25 (LMLL…NHGG) and 63-83 (LLFT…LGYC).

It belongs to the CbiN family. As to quaternary structure, forms an energy-coupling factor (ECF) transporter complex composed of an ATP-binding protein (A component, CbiO), a transmembrane protein (T component, CbiQ) and 2 possible substrate-capture proteins (S components, CbiM and CbiN) of unknown stoichimetry.

The protein resides in the cell inner membrane. It functions in the pathway cofactor biosynthesis; adenosylcobalamin biosynthesis. Part of the energy-coupling factor (ECF) transporter complex CbiMNOQ involved in cobalt import. This chain is Cobalt transport protein CbiN, found in Salmonella agona (strain SL483).